The following is a 246-amino-acid chain: Transcription factor MYB13 (246 aa).

HTH myb-type domains are found at residues 9–61 (KIGL…INYL) and 62–116 (RPDI…KKRL). DNA-binding regions (H-T-H motif) lie at residues 37-61 (WRAL…INYL) and 89-112 (WSAI…HTHL).

As to expression, expressed in roots and flowers. Expressed in shoot apex, axillary buds, at the basis of flowers and branching points of inflorescences.

Its subcellular location is the nucleus. Its function is as follows. Plays a regulatory role in meristem function. Functions as component of a regulatory network controlling the establishment and/or development of the shoot system by the regulation of apical meristem function. May play a role in tolerance to boric acid. This chain is Transcription factor MYB13, found in Arabidopsis thaliana (Mouse-ear cress).